A 217-amino-acid polypeptide reads, in one-letter code: 3,4-dihydroxy-2-butanone 4-phosphate synthase (217 aa).

D-ribulose 5-phosphate is bound by residues 37 to 38 (RE), Asp42, 150 to 154 (RGGHT), and Glu174. Glu38 contacts Mg(2+). His153 provides a ligand contact to Mg(2+).

It belongs to the DHBP synthase family. Homodimer. Requires Mg(2+) as cofactor. Mn(2+) is required as a cofactor.

The enzyme catalyses D-ribulose 5-phosphate = (2S)-2-hydroxy-3-oxobutyl phosphate + formate + H(+). It participates in cofactor biosynthesis; riboflavin biosynthesis; 2-hydroxy-3-oxobutyl phosphate from D-ribulose 5-phosphate: step 1/1. Functionally, catalyzes the conversion of D-ribulose 5-phosphate to formate and 3,4-dihydroxy-2-butanone 4-phosphate. In Escherichia coli O17:K52:H18 (strain UMN026 / ExPEC), this protein is 3,4-dihydroxy-2-butanone 4-phosphate synthase.